The following is a 316-amino-acid chain: Inactive peptidyl-prolyl cis-trans isomerase FKBP6 (316 aa).

The 90-residue stretch at 43–132 (DASVLVKYSG…LFEIELLDFL (90 aa)) folds into the PPIase FKBP-type domain. TPR repeat units follow at residues 160-193 (AATEREFGNYLFRQHRFYDAKVRYKRALLLLHRR), 208-241 (LLVLLNLSFTYLKLERPTTALCYGEQALVIDQKN), and 242-275 (AKALFRCGQACLLMTEYQKARDFLVQAQKAQPFN).

The protein belongs to the FKBP6 family. Interacts with HSP72/HSPA2 and CLTC. Interacts with GAPDH; leading to inhibit GAPDH catalytic activity. Interacts (via TPR repeats) with HSP90. In terms of tissue distribution, specifically expressed in testis and sperm.

The protein localises to the cytoplasm. Its subcellular location is the cytosol. The protein resides in the nucleus. Co-chaperone required during spermatogenesis to repress transposable elements and prevent their mobilization, which is essential for the germline integrity. Acts via the piRNA metabolic process, which mediates the repression of transposable elements during meiosis by forming complexes composed of piRNAs and Piwi proteins and govern the methylation and subsequent repression of transposons. Acts as a co-chaperone via its interaction with HSP90 and is required for the piRNA amplification process, the secondary piRNA biogenesis. May be required together with HSP90 in removal of 16 nucleotide ping-pong by-products from Piwi complexes, possibly facilitating turnover of Piwi complexes. In Equus caballus (Horse), this protein is Inactive peptidyl-prolyl cis-trans isomerase FKBP6 (FKBP6).